The following is a 20-amino-acid chain: D-alpha-glycerophosphatase (20 aa).

As to quaternary structure, monomer. Mg(2+) is required as a cofactor. The cofactor is Mn(2+).

The protein localises to the cytoplasm. It functions in the pathway polyol metabolism; glycerol biosynthesis. The polypeptide is D-alpha-glycerophosphatase (Bacillus licheniformis).